The following is a 120-amino-acid chain: NAD(P)H-quinone oxidoreductase subunit 3 (120 aa).

Helical transmembrane passes span 10-32, 64-84, and 89-109; these read LLGF…KVLR, MFAL…PWAV, and LGVL…VGLV.

It belongs to the complex I subunit 3 family. In terms of assembly, NDH-1 can be composed of about 15 different subunits; different subcomplexes with different compositions have been identified which probably have different functions.

It localises to the cellular thylakoid membrane. The catalysed reaction is a plastoquinone + NADH + (n+1) H(+)(in) = a plastoquinol + NAD(+) + n H(+)(out). It catalyses the reaction a plastoquinone + NADPH + (n+1) H(+)(in) = a plastoquinol + NADP(+) + n H(+)(out). In terms of biological role, NDH-1 shuttles electrons from an unknown electron donor, via FMN and iron-sulfur (Fe-S) centers, to quinones in the respiratory and/or the photosynthetic chain. The immediate electron acceptor for the enzyme in this species is believed to be plastoquinone. Couples the redox reaction to proton translocation, and thus conserves the redox energy in a proton gradient. Cyanobacterial NDH-1 also plays a role in inorganic carbon-concentration. The sequence is that of NAD(P)H-quinone oxidoreductase subunit 3 from Acaryochloris marina (strain MBIC 11017).